The chain runs to 169 residues: Ribosome maturation factor RimM (169 aa).

The 75-residue stretch at 94 to 168 (DDEFYHADLI…RIVADPPEGL (75 aa)) folds into the PRC barrel domain.

The protein belongs to the RimM family. As to quaternary structure, binds ribosomal protein uS19.

The protein resides in the cytoplasm. Its function is as follows. An accessory protein needed during the final step in the assembly of 30S ribosomal subunit, possibly for assembly of the head region. Essential for efficient processing of 16S rRNA. May be needed both before and after RbfA during the maturation of 16S rRNA. It has affinity for free ribosomal 30S subunits but not for 70S ribosomes. This is Ribosome maturation factor RimM from Cereibacter sphaeroides (strain ATCC 17025 / ATH 2.4.3) (Rhodobacter sphaeroides).